The chain runs to 298 residues: Putative S-adenosyl-L-methionine-dependent methyltransferase MAV_0778 (298 aa).

S-adenosyl-L-methionine-binding positions include D124 and 153 to 154 (DL).

This sequence belongs to the UPF0677 family.

Its function is as follows. Exhibits S-adenosyl-L-methionine-dependent methyltransferase activity. This chain is Putative S-adenosyl-L-methionine-dependent methyltransferase MAV_0778, found in Mycobacterium avium (strain 104).